The primary structure comprises 308 residues: MSAQKPGLHPRNRHHSRYDLATLCQVNPELRQFLTLTPAGEQSVDFANPLAVKALNKALLAHFYAVANWDIPDGFLCPPVPGRADYIHHLADLLAEASGTIPANASILDIGVGANCIYPLIGVHEYGWRFTGSETSSQALSSAQAIISANPGLNRAIRLRRQKESGAIFNGIIHKNEQYDATLCNPPFHDSAAAARAGSERKRRNLGLNKDDALNFGGQQQELWCEGGEVNFIKKMIEESKGFAKQVMWFTSLVSRGENLPPLYRALTDVGAVKVVKKEMAQGQKQSRFIAWTFMNDEQRRRFVNRQR.

It belongs to the methyltransferase superfamily. METTL16/RlmF family.

It localises to the cytoplasm. The enzyme catalyses adenosine(1618) in 23S rRNA + S-adenosyl-L-methionine = N(6)-methyladenosine(1618) in 23S rRNA + S-adenosyl-L-homocysteine + H(+). Functionally, specifically methylates the adenine in position 1618 of 23S rRNA. The protein is Ribosomal RNA large subunit methyltransferase F of Shigella flexneri serotype 5b (strain 8401).